We begin with the raw amino-acid sequence, 266 residues long: Glutamate racemase 1 (266 aa).

Substrate is bound by residues 11–12 (DS) and 43–44 (YG). Catalysis depends on Cys74, which acts as the Proton donor/acceptor. Residue 75–76 (NT) participates in substrate binding. Catalysis depends on Cys182, which acts as the Proton donor/acceptor. Residue 183–184 (TH) participates in substrate binding.

It belongs to the aspartate/glutamate racemases family.

The enzyme catalyses L-glutamate = D-glutamate. It functions in the pathway cell wall biogenesis; peptidoglycan biosynthesis. Functionally, provides the (R)-glutamate required for cell wall biosynthesis. This chain is Glutamate racemase 1, found in Caldanaerobacter subterraneus subsp. tengcongensis (strain DSM 15242 / JCM 11007 / NBRC 100824 / MB4) (Thermoanaerobacter tengcongensis).